The sequence spans 110 residues: MIGGKFNLGSLMKNAKKIQEMMQKAQDELAKIRVTGESGAGMVKLTMTAQHEVVEMNLDDELLKESKEVIEDLIKAALNDANQKILKITQEKMMSAGSLFGGNESDNEET.

Belongs to the YbaB/EbfC family. As to quaternary structure, homodimer.

The protein resides in the cytoplasm. It is found in the nucleoid. In terms of biological role, binds to DNA and alters its conformation. May be involved in regulation of gene expression, nucleoid organization and DNA protection. This chain is Nucleoid-associated protein CbuK_1603, found in Coxiella burnetii (strain CbuK_Q154) (Coxiella burnetii (strain Q154)).